The chain runs to 264 residues: Phosphate import ATP-binding protein PstB 1 (264 aa).

The ABC transporter domain maps to 20 to 259; that stretch reads LETRDLNIFY…PKIKLTEDYI (240 aa). Position 52 to 59 (52 to 59) interacts with ATP; that stretch reads GASGSGKS.

The protein belongs to the ABC transporter superfamily. Phosphate importer (TC 3.A.1.7) family. The complex is composed of two ATP-binding proteins (PstB), two transmembrane proteins (PstC and PstA) and a solute-binding protein (PstS).

It localises to the cell membrane. It carries out the reaction phosphate(out) + ATP + H2O = ADP + 2 phosphate(in) + H(+). Part of the ABC transporter complex PstSACB involved in phosphate import. Responsible for energy coupling to the transport system. The chain is Phosphate import ATP-binding protein PstB 1 from Ligilactobacillus salivarius (strain UCC118) (Lactobacillus salivarius).